Consider the following 206-residue polypeptide: Protein PH0010 (206 aa).

The region spanning 8–202 (EWGEFLVRLA…EEYPRGPIKR (195 aa)) is the AMMECR1 domain.

This chain is Protein PH0010, found in Pyrococcus horikoshii (strain ATCC 700860 / DSM 12428 / JCM 9974 / NBRC 100139 / OT-3).